The chain runs to 151 residues: Cytochrome c-type biogenesis protein CcmE (151 aa).

Over 1 to 8 (MNPLRKKR) the chain is Cytoplasmic. Residues 9-29 (LLIILAILVGVGIAVGLALSA) traverse the membrane as a helical; Signal-anchor for type II membrane protein segment. Topologically, residues 30 to 151 (LKENINLFYT…QSAPTPAKEG (122 aa)) are periplasmic. 2 residues coordinate heme: His124 and Tyr128. The disordered stretch occupies residues 131 to 151 (PEVTKALKDSGQSAPTPAKEG).

Belongs to the CcmE/CycJ family.

Its subcellular location is the cell inner membrane. In terms of biological role, heme chaperone required for the biogenesis of c-type cytochromes. Transiently binds heme delivered by CcmC and transfers the heme to apo-cytochromes in a process facilitated by CcmF and CcmH. This is Cytochrome c-type biogenesis protein CcmE from Pseudomonas fluorescens (strain ATCC BAA-477 / NRRL B-23932 / Pf-5).